The sequence spans 355 residues: UDP-N-acetylglucosamine--N-acetylmuramyl-(pentapeptide) pyrophosphoryl-undecaprenol N-acetylglucosamine transferase (355 aa).

Residues 14–16, Asn126, Arg162, Ser190, Ile243, 262–267, and Gln287 each bind UDP-N-acetyl-alpha-D-glucosamine; these read TGG and ALTVSE.

The protein belongs to the glycosyltransferase 28 family. MurG subfamily.

Its subcellular location is the cell inner membrane. The catalysed reaction is di-trans,octa-cis-undecaprenyl diphospho-N-acetyl-alpha-D-muramoyl-L-alanyl-D-glutamyl-meso-2,6-diaminopimeloyl-D-alanyl-D-alanine + UDP-N-acetyl-alpha-D-glucosamine = di-trans,octa-cis-undecaprenyl diphospho-[N-acetyl-alpha-D-glucosaminyl-(1-&gt;4)]-N-acetyl-alpha-D-muramoyl-L-alanyl-D-glutamyl-meso-2,6-diaminopimeloyl-D-alanyl-D-alanine + UDP + H(+). It functions in the pathway cell wall biogenesis; peptidoglycan biosynthesis. Cell wall formation. Catalyzes the transfer of a GlcNAc subunit on undecaprenyl-pyrophosphoryl-MurNAc-pentapeptide (lipid intermediate I) to form undecaprenyl-pyrophosphoryl-MurNAc-(pentapeptide)GlcNAc (lipid intermediate II). The protein is UDP-N-acetylglucosamine--N-acetylmuramyl-(pentapeptide) pyrophosphoryl-undecaprenol N-acetylglucosamine transferase of Vibrio campbellii (strain ATCC BAA-1116).